The sequence spans 461 residues: Phytase PHO112 (461 aa).

3 cysteine pairs are disulfide-bonded: Cys62–Cys384, Cys261–Cys274, and Cys404–Cys412. The 1D-myo-inositol hexakisphosphate site is built by Arg72, His73, Arg76, and Ser79. His73 functions as the Nucleophile in the catalytic mechanism. Asn97 and Asn157 each carry an N-linked (GlcNAc...) asparagine glycan. Position 169 (Arg169) interacts with 1D-myo-inositol hexakisphosphate. N-linked (GlcNAc...) asparagine glycans are attached at residues Asn229 and Asn248. Lys293 provides a ligand contact to 1D-myo-inositol hexakisphosphate. N-linked (GlcNAc...) asparagine glycans are attached at residues Asn302 and Asn313. His334 and Asp335 together coordinate 1D-myo-inositol hexakisphosphate. N-linked (GlcNAc...) asparagine glycans are attached at residues Asn437 and Asn452.

The protein belongs to the histidine acid phosphatase family. As to quaternary structure, monomer.

The protein localises to the secreted. It carries out the reaction 1D-myo-inositol hexakisphosphate + H2O = 1D-myo-inositol 1,2,4,5,6-pentakisphosphate + phosphate. The enzyme catalyses 1D-myo-inositol 1,2,4,5,6-pentakisphosphate + H2O = 1D-myo-inositol 1,2,5,6-tetrakisphosphate + phosphate. The catalysed reaction is 1D-myo-inositol 1,2,5,6-tetrakisphosphate + H2O = 1D-myo-inositol 1,2,6-trisphosphate + phosphate. It catalyses the reaction 1D-myo-inositol 1,2,6-trisphosphate + H2O = 1D-myo-inositol 1,2-bisphosphate + phosphate. It carries out the reaction 1D-myo-inositol 1,2-bisphosphate + H2O = 1D-myo-inositol 2-phosphate + phosphate. In terms of biological role, catalyzes the phosphate monoester hydrolysis of phytic acid (myo-inositol hexakisphosphate), which results in the stepwise formation of myo-inositol pentakis-, tetrakis-, tris-, bis-, and monophosphates, as well as the liberation of inorganic phosphate. Myo-inositol 2-monophosphate is the end product. Responsible of about 25% of the phytase activity. The residual phytase activity might be contributed by other cytosolic or cellular enzymes such as acid phosphatase that also degraded the substrate phytate. Is essential for human tissue damage during infection. The chain is Phytase PHO112 (PHO112) from Candida albicans (strain SC5314 / ATCC MYA-2876) (Yeast).